The sequence spans 616 residues: Chaperone protein HscA (616 aa).

It belongs to the heat shock protein 70 family.

Its function is as follows. Chaperone involved in the maturation of iron-sulfur cluster-containing proteins. Has a low intrinsic ATPase activity which is markedly stimulated by HscB. Involved in the maturation of IscU. The chain is Chaperone protein HscA from Yersinia enterocolitica serotype O:8 / biotype 1B (strain NCTC 13174 / 8081).